We begin with the raw amino-acid sequence, 209 residues long: Uracil phosphoribosyltransferase (209 aa).

5-phospho-alpha-D-ribose 1-diphosphate contacts are provided by residues Arg-79, Arg-104, and 131–139; that span reads DPMLATGGS. Uracil is bound by residues Val-194 and 199-201; that span reads GDA. A 5-phospho-alpha-D-ribose 1-diphosphate-binding site is contributed by Asp-200.

It belongs to the UPRTase family. It depends on Mg(2+) as a cofactor.

It catalyses the reaction UMP + diphosphate = 5-phospho-alpha-D-ribose 1-diphosphate + uracil. It functions in the pathway pyrimidine metabolism; UMP biosynthesis via salvage pathway; UMP from uracil: step 1/1. With respect to regulation, allosterically activated by GTP. In terms of biological role, catalyzes the conversion of uracil and 5-phospho-alpha-D-ribose 1-diphosphate (PRPP) to UMP and diphosphate. This chain is Uracil phosphoribosyltransferase, found in Bacillus mycoides (strain KBAB4) (Bacillus weihenstephanensis).